The primary structure comprises 436 residues: MFDSTLNPLWQRYILAVQEEVKPALGCTEPISLALAAAVAAAELEGPVERVEAWVSPNLMKNGLGVTVPGTGMVGLPIAAALGALGGNANAGLEVLKDATAQAIADAKALLAAGKVSVKIQEPCNEILFSRAKVWNGEKWACVTIVGGHTNIVHIETHDGVVFTQQACVAEGEQESPLTVLSRTTLAEILKFVNEVPFAAIRFILDSAKLNCALSQEGLSGKWGLHIGATLEKQCERGLLAKDLSSSIVIRTSAASDARMGGATLPAMSNSGSGNQGITATMPVVVVAEHFGADDERLARALMLSHLSAIYIHNQLPRLSALCAATTAAMGAAAGMAWLVDGRYETISMAISSMIGDVSGMICDGASNSCAMKVSTSASAAWKAVLMALDDTAVTGNEGIVAHDVEQSIANLCALASHSMQQTDRQIIEIMASKAR.

This sequence belongs to the UPF0597 family.

The polypeptide is UPF0597 protein YhaM (Escherichia coli (strain SE11)).